We begin with the raw amino-acid sequence, 325 residues long: Succinylglutamate desuccinylase (325 aa).

Zn(2+) contacts are provided by histidine 51, glutamate 54, and histidine 148. Glutamate 211 is an active-site residue.

The protein belongs to the AspA/AstE family. Succinylglutamate desuccinylase subfamily. Requires Zn(2+) as cofactor.

The enzyme catalyses N-succinyl-L-glutamate + H2O = L-glutamate + succinate. It participates in amino-acid degradation; L-arginine degradation via AST pathway; L-glutamate and succinate from L-arginine: step 5/5. Transforms N(2)-succinylglutamate into succinate and glutamate. The sequence is that of Succinylglutamate desuccinylase from Photorhabdus laumondii subsp. laumondii (strain DSM 15139 / CIP 105565 / TT01) (Photorhabdus luminescens subsp. laumondii).